The following is a 306-amino-acid chain: Probable dimethyladenosine transferase (306 aa).

Positions 30, 32, 57, 78, 106, and 121 each coordinate S-adenosyl-L-methionine.

The protein belongs to the class I-like SAM-binding methyltransferase superfamily. rRNA adenine N(6)-methyltransferase family. As to quaternary structure, part of the small subunit (SSU) processome, composed of more than 70 proteins and the RNA chaperone small nucleolar RNA (snoRNA) U3.

The protein localises to the nucleus. The protein resides in the nucleolus. The catalysed reaction is adenosine(1779)/adenosine(1780) in 18S rRNA + 4 S-adenosyl-L-methionine = N(6)-dimethyladenosine(1779)/N(6)-dimethyladenosine(1780) in 18S rRNA + 4 S-adenosyl-L-homocysteine + 4 H(+). Functionally, specifically dimethylates two adjacent adenosines in the loop of a conserved hairpin near the 3'-end of 18S rRNA in the 40S particle. Involved in the pre-rRNA processing steps leading to small-subunit rRNA production independently of its RNA-modifying catalytic activity. Part of the small subunit (SSU) processome, first precursor of the small eukaryotic ribosomal subunit. During the assembly of the SSU processome in the nucleolus, many ribosome biogenesis factors, an RNA chaperone and ribosomal proteins associate with the nascent pre-rRNA and work in concert to generate RNA folding, modifications, rearrangements and cleavage as well as targeted degradation of pre-ribosomal RNA by the RNA exosome. The sequence is that of Probable dimethyladenosine transferase from Drosophila melanogaster (Fruit fly).